We begin with the raw amino-acid sequence, 491 residues long: Cobyric acid synthase (491 aa).

A GATase cobBQ-type domain is found at 250-437 (RLRVVVPVLP…LHGIFDHPAA (188 aa)). C331 (nucleophile) is an active-site residue. H429 is an active-site residue.

This sequence belongs to the CobB/CobQ family. CobQ subfamily.

The protein operates within cofactor biosynthesis; adenosylcobalamin biosynthesis. Functionally, catalyzes amidations at positions B, D, E, and G on adenosylcobyrinic A,C-diamide. NH(2) groups are provided by glutamine, and one molecule of ATP is hydrogenolyzed for each amidation. This is Cobyric acid synthase from Xanthomonas campestris pv. campestris (strain B100).